The chain runs to 506 residues: Maturase K (506 aa).

Belongs to the intron maturase 2 family. MatK subfamily.

Its subcellular location is the plastid. The protein localises to the chloroplast. Functionally, usually encoded in the trnK tRNA gene intron. Probably assists in splicing its own and other chloroplast group II introns. The protein is Maturase K of Cytisus scoparius (Scotch broom).